Consider the following 943-residue polypeptide: MAERPEERQWKEWEEAGLFEADPDDRESVYITVAYPYPSGSMHVGHARTYLVPDIYARFKRMQGYNVLFPMAFHVTGTPVVGIAERIKEGDEDTIRLYRDLYGVPEEELEKFTEPEAIVEYFAREYEENMKRMGYSIDWRRKFTTVDPEYRSFITWQYLRLREKGLVDKGEHPVRYCPHCENPVGDHDLLEGEDATIEELTLVKFPVEGDDLILVAATFRPETLYGATNVWVKPDEEYLVVEVDGERWVVSEEAYRNLRHQKDGVEKVDTVRGEELIGESVVNPVTGEALPVLPAEFIDPKFGTGVVYSVPAHAPADAAALEDLKKDPSVLEEYGVDPSVVEELEPVQVIEVEGYGEFPAYDALEEHGIESQTDPELEKATQEVYRAELHKGVMVVDEFEGTPVREAREEIKSRLIESGDADVMYDFSEKPVICRCGTECVVRILKDQWFLRYSDGEWKERAEELLGRMEIVPEEVRANFEDTIEWLDDWACARRVGLGTPLPWDPDWIVEPLSDSTVYMAYYTIAHRLKGKGELPPEVFDYVFLGEGDPEEIAEKAGLDVEELEAMREEFEYWYPLNWRLSAKDLVTNHLTFFIFHHAALFPEDKWPKGIVVFGMGLLEGQKMSSSKGNVVLLSEALDEYGPDVVRLFLATSAEPWQDFDWRDEYVRGVQRHLERFETLIRDHADESVEDKDAVDRWFLHEFREVVEETTEALEGFQIRRAYNRAFYGVMKLLREYEAMKGHVKILGEIAEDWLKLLHPVIPFATDRLWREVLGEDSFLLEEEWPDPSEYPEEPELSVAKEVLDRLIEDVRDVEKVIGAEPGYTLHVYLAPEWQWRALELILKDKEFGEVMSELMKDEGLREKGDEVAKIVQELTKEDLPEDVDVDALREALTEFLEAAGRALTDKTGASEVVIHTDPEEAPGPEDRKAGARPLRPGIWLEE.

Positions 36–46 match the 'HIGH' region motif; that stretch reads PYPSGSMHVGH. Positions 623–627 match the 'KMSKS' region motif; the sequence is KMSSS. Residues 910–943 form a disordered region; the sequence is ASEVVIHTDPEEAPGPEDRKAGARPLRPGIWLEE. The span at 915–930 shows a compositional bias: basic and acidic residues; sequence IHTDPEEAPGPEDRKA.

It belongs to the class-I aminoacyl-tRNA synthetase family.

Its subcellular location is the cytoplasm. It carries out the reaction tRNA(Leu) + L-leucine + ATP = L-leucyl-tRNA(Leu) + AMP + diphosphate. The protein is Leucine--tRNA ligase of Methanopyrus kandleri (strain AV19 / DSM 6324 / JCM 9639 / NBRC 100938).